We begin with the raw amino-acid sequence, 480 residues long: Ammonium transporter 3 member 3 (480 aa).

11 helical membrane passes run 31–51 (SATL…GSIV), 59–79 (SAFM…VWAY), 135–155 (MVYF…GSLL), 169–189 (LWIT…GFLF), 198–218 (GGYV…YWVG), 233–253 (ILLV…FNGG), 265–287 (AVLN…DVFF), 292–314 (SVIG…AGLV), 318–337 (AAIV…MMVL), 361–381 (GFLG…SLFL), and 407–427 (LFVT…ISLI).

Belongs to the ammonia transporter channel (TC 1.A.11.2) family.

It localises to the membrane. Involved in ammonium transport. In Oryza sativa subsp. japonica (Rice), this protein is Ammonium transporter 3 member 3 (AMT3-3).